The sequence spans 586 residues: uncharacterized protein (586 aa).

The disordered stretch occupies residues 1–115 (MRVLVAETGR…NTEKLAGRDD (115 aa)). Residues 8 to 20 (TGREDNVSVHSRE) show a composition bias toward basic and acidic residues. The span at 21–31 (VSVNGSDSGTG) shows a compositional bias: polar residues. Residues 35–44 (YKLETDDEHP) are compositionally biased toward basic and acidic residues. Residues 76-107 (TGMNTEYNDDNSSLVNTPRDSTTYAETNSPNT) are compositionally biased toward polar residues. 6 WD repeats span residues 184–223 (QFKESVWASEISKSGKYLATAGKDAIIRVWKVIETPERRE), 253–291 (GHNAEVLSISWSKNDFLLTSSADRTVRLWHPKSTKSLAV), 293–333 (RHNE…ILHW), 335–374 (ELEYVVSTICFYPDGESIVVGMFYGLCAIYETKNLQYVSS), 387–430 (CRVT…LVLK), and 432–474 (SDAH…LINA).

It is found in the cytoplasm. Its subcellular location is the nucleus. This is an uncharacterized protein from Schizosaccharomyces pombe (strain 972 / ATCC 24843) (Fission yeast).